A 1063-amino-acid polypeptide reads, in one-letter code: Probable hemoglobin and hemoglobin-haptoglobin-binding protein 1 (1063 aa).

The N-terminal stretch at 1–24 (MTNFKFSLLACSIAFALNASIAYA) is a signal peptide. Tandem repeats lie at residues 26-29 (QPTN), 30-33 (QPTN), 34-37 (QPTN), 38-41 (QPTN), 42-45 (QPTN), 46-49 (QPTN), and 50-53 (QPTN). Residues 26 to 53 (QPTNQPTNQPTNQPTNQPTNQPTNQPTN) are 7 X 4 AA tandem repeats of Q-P-T-N. Residues 28 to 55 (TNQPTNQPTNQPTNQPTNQPTNQPTNQN) are compositionally biased toward low complexity. The disordered stretch occupies residues 28-57 (TNQPTNQPTNQPTNQPTNQPTNQPTNQNSN). Residues 63-70 (EQINVSGS) carry the TonB box motif. The region spanning 66–200 (NVSGSSENIN…LGGSVIFETK (135 aa)) is the TBDR plug domain. Residues 208 to 1063 (DKDYYLSYKR…NYRMSVQFEF (856 aa)) form the TBDR beta-barrel domain. Positions 1046-1063 (NRFYAPGRNYRMSVQFEF) match the TonB C-terminal box motif.

This sequence belongs to the TonB-dependent receptor family. Hemoglobin/haptoglobin binding protein subfamily.

The protein localises to the cell outer membrane. In terms of biological role, acts as a receptor for hemoglobin or the hemoglobin/haptoglobin complex of the human host and is required for heme uptake. The sequence is that of Probable hemoglobin and hemoglobin-haptoglobin-binding protein 1 from Haemophilus influenzae (strain ATCC 51907 / DSM 11121 / KW20 / Rd).